Here is a 760-residue protein sequence, read N- to C-terminus: Probable ubiquitin carboxyl-terminal hydrolase creB (760 aa).

The disordered stretch occupies residues 1–28 (MGSFLRSFRNNAGSTTPSVGAVPAKKEV). Residues 8 to 18 (FRNNAGSTTPS) show a composition bias toward polar residues. The 415-residue stretch at 55–469 (YGMENYGNTC…CAYVLFYQET (415 aa)) folds into the USP domain. The active-site Nucleophile is the Cys64. 2 disordered regions span residues 114–146 (AEAQ…DSPD) and 242–270 (PAAI…KTPN). A compositionally biased stretch (polar residues) spans 258–270 (VDQSASSGSKTPN). The Proton acceptor role is filled by His420. Residues 520 to 760 (EEHNRPNGLK…LRKKSFSILS (241 aa)) are disordered. Residues 575 to 635 (KSDVQGKKER…AALEASKASK (61 aa)) adopt a coiled-coil conformation. 3 stretches are compositionally biased toward basic and acidic residues: residues 578-626 (VQGK…ELKA), 635-651 (KAQE…KDKL), and 708-742 (DPKD…ERTG). Residues 743–760 (HGKWRSFSLRKKSFSILS) show a composition bias toward basic residues.

The protein belongs to the peptidase C19 family. In terms of assembly, interacts with creA, creC and qutD.

The catalysed reaction is Thiol-dependent hydrolysis of ester, thioester, amide, peptide and isopeptide bonds formed by the C-terminal Gly of ubiquitin (a 76-residue protein attached to proteins as an intracellular targeting signal).. Its function is as follows. Ubiquitin thioesterase component of the regulatory network controlling carbon source utilization through ubiquitination and deubiquitination involving creA, creB, creC, creD and acrB. Deubiquitinates the creA catabolic repressor and the quinate permease qutD. Also plays a role in response to carbon starvation and the control of extracellular proteases activity. This Aspergillus clavatus (strain ATCC 1007 / CBS 513.65 / DSM 816 / NCTC 3887 / NRRL 1 / QM 1276 / 107) protein is Probable ubiquitin carboxyl-terminal hydrolase creB (creB).